Here is a 297-residue protein sequence, read N- to C-terminus: Cytosolic Fe-S cluster assembly factor CFD1 (297 aa).

15 to 22 lines the ATP pocket; the sequence is GKGGVGKS. Positions 216 and 219 each coordinate [4Fe-4S] cluster.

It belongs to the Mrp/NBP35 ATP-binding proteins family. NUBP2/CFD1 subfamily. Heterotetramer of 2 NBP35 and 2 CFD1 chains. Requires [4Fe-4S] cluster as cofactor.

It is found in the cytoplasm. Its function is as follows. Component of the cytosolic iron-sulfur (Fe/S) protein assembly (CIA) machinery. Required for maturation of extramitochondrial Fe-S proteins. The NBP35-CFD1 heterotetramer forms a Fe-S scaffold complex, mediating the de novo assembly of an Fe-S cluster and its transfer to target apoproteins. This Phaeosphaeria nodorum (strain SN15 / ATCC MYA-4574 / FGSC 10173) (Glume blotch fungus) protein is Cytosolic Fe-S cluster assembly factor CFD1.